A 102-amino-acid chain; its full sequence is Small ribosomal subunit protein uS10 (102 aa).

The protein belongs to the universal ribosomal protein uS10 family. In terms of assembly, part of the 30S ribosomal subunit.

In terms of biological role, involved in the binding of tRNA to the ribosomes. This Bifidobacterium animalis subsp. lactis (strain AD011) protein is Small ribosomal subunit protein uS10.